A 126-amino-acid polypeptide reads, in one-letter code: Histone H2B (126 aa).

A compositionally biased stretch (low complexity) spans 1–12 (MPEPAKSAPAPK). The disordered stretch occupies residues 1–36 (MPEPAKSAPAPKKGSKKAVTKTQKKGDKKRKKSRKE). Lysine 6 and lysine 13 each carry N6-acetyllysine. Over residues 13–34 (KGSKKAVTKTQKKGDKKRKKSR) the composition is skewed to basic residues. At serine 15 the chain carries Phosphoserine. Residues lysine 16 and lysine 21 each carry the N6-acetyllysine modification. Lysine 121 participates in a covalent cross-link: Glycyl lysine isopeptide (Lys-Gly) (interchain with G-Cter in ubiquitin).

The protein belongs to the histone H2B family. In terms of assembly, the nucleosome is a histone octamer containing two molecules each of H2A, H2B, H3 and H4 assembled in one H3-H4 heterotetramer and two H2A-H2B heterodimers. The octamer wraps approximately 147 bp of DNA. In terms of processing, monoubiquitination of Lys-121 by the RNF20/40 complex gives a specific tag for epigenetic transcriptional activation and is also prerequisite for histone H3 'Lys-4' and 'Lys-79' methylation. Post-translationally, phosphorylated on Ser-15 during apoptosis; which facilitates apoptotic chromatin condensation.

The protein resides in the nucleus. It localises to the chromosome. Functionally, core component of nucleosome. Nucleosomes wrap and compact DNA into chromatin, limiting DNA accessibility to the cellular machineries which require DNA as a template. Histones thereby play a central role in transcription regulation, DNA repair, DNA replication and chromosomal stability. DNA accessibility is regulated via a complex set of post-translational modifications of histones, also called histone code, and nucleosome remodeling. The protein is Histone H2B of Cairina moschata (Muscovy duck).